A 554-amino-acid polypeptide reads, in one-letter code: Formate--tetrahydrofolate ligase (554 aa).

ATP is bound at residue Thr-67–Thr-74.

It belongs to the formate--tetrahydrofolate ligase family.

The catalysed reaction is (6S)-5,6,7,8-tetrahydrofolate + formate + ATP = (6R)-10-formyltetrahydrofolate + ADP + phosphate. The protein operates within one-carbon metabolism; tetrahydrofolate interconversion. In Finegoldia magna (strain ATCC 29328 / DSM 20472 / WAL 2508) (Peptostreptococcus magnus), this protein is Formate--tetrahydrofolate ligase.